The following is a 358-amino-acid chain: Uroporphyrinogen decarboxylase (358 aa).

Substrate is bound by residues 29–33 (RQAGR), Phe48, Asp79, Tyr155, Ser210, and His330.

This sequence belongs to the uroporphyrinogen decarboxylase family. In terms of assembly, homodimer.

It is found in the cytoplasm. The catalysed reaction is uroporphyrinogen III + 4 H(+) = coproporphyrinogen III + 4 CO2. The protein operates within porphyrin-containing compound metabolism; protoporphyrin-IX biosynthesis; coproporphyrinogen-III from 5-aminolevulinate: step 4/4. In terms of biological role, catalyzes the decarboxylation of four acetate groups of uroporphyrinogen-III to yield coproporphyrinogen-III. In Bordetella pertussis (strain Tohama I / ATCC BAA-589 / NCTC 13251), this protein is Uroporphyrinogen decarboxylase.